The chain runs to 454 residues: Neuronal acetylcholine receptor subunit alpha-5 (454 aa).

Residues 1–26 (MPLRARSRKPGAGPAARAPQAGVSEP) are disordered. A signal peptide spans 1–29 (MPLRARSRKPGAGPAARAPQAGVSEPSFV). Positions 10–22 (PGAGPAARAPQAG) are enriched in low complexity. The Extracellular portion of the chain corresponds to 30 to 240 (AKSEDRLFKH…IIRRLPLFYT (211 aa)). N55, N169, and N215 each carry an N-linked (GlcNAc...) asparagine glycan. C156 and C170 are joined by a disulfide. A disulfide bridge links C220 with C221. A run of 3 helical transmembrane segments spans residues 241–261 (LFLIIPCIGLSFLTVLVFYLP), 270–290 (LCTSVLVSLTVFLLVIEEIIP), and 303–323 (LVFTMIFVTLSIVITVFAINI). Topologically, residues 324-416 (HHRSSSTHNA…KFIAQVLDRM (93 aa)) are cytoplasmic. The chain crosses the membrane as a helical span at residues 417-437 (FLWAFLLVSIIGSLVLFIPVI). Over 438-454 (HKWASIIVPVHIGSTNT) the chain is Extracellular.

Belongs to the ligand-gated ion channel (TC 1.A.9) family. Acetylcholine receptor (TC 1.A.9.1) subfamily. Alpha-5/CHRNA5 sub-subfamily. Neuronal AChR that forms heteropentamers composed of two different type of subunits: alpha and non-alpha (beta). CHRNA5/alpha-5 subunit is only able to form functional nAChRs when co-assembled with another alpha subunit, can be combined to CHRNA4/alpha-4 or CHRNA3/alpha-3 and CHRNB4/beta-4 or CHRNB2/beta-2 to give rise to functional receptors. Interacts with LYPD6.

Its subcellular location is the synaptic cell membrane. The protein localises to the cell membrane. The enzyme catalyses Ca(2+)(in) = Ca(2+)(out). The catalysed reaction is K(+)(in) = K(+)(out). It catalyses the reaction Na(+)(in) = Na(+)(out). Its activity is regulated as follows. Activated by a myriad of ligands such as acetylcholine, cytisine, nicotine, choline and epibatidine. Its function is as follows. Component of neuronal acetylcholine receptors (nAChRs) that function as pentameric, ligand-gated cation channels with high calcium permeability among other activities. nAChRs are excitatory neurotrasnmitter receptors formed by a collection of nAChR subunits known to mediate synaptic transmission in the nervous system and the neuromuscular junction. Each nAchR subunit confers differential attributes to channel properties, including activation, deactivation and desensitization kinetics, pH sensitivity, cation permeability, and binding to allosteric modulators. Has an accessory rather than functional role and is only able to form functional nAChRs when co-assembled with another beta subunit. Participates in pentameric assemblies along with CHRNA3, CHRNA4, CHRNB2 and CHRNB4. Increases receptor sensitivity to acetylcholine and nicotine when associated with CHRNA4 and CHRNB2. Plays a role in nicotine addiction. This is Neuronal acetylcholine receptor subunit alpha-5 (CHRNA5) from Gallus gallus (Chicken).